Here is a 312-residue protein sequence, read N- to C-terminus: Holliday junction branch migration complex subunit RuvB (312 aa).

Residues methionine 1–tyrosine 168 are large ATPase domain (RuvB-L). Residues arginine 8, glycine 49, lysine 52, threonine 53, threonine 54, glutamate 115 to phenylalanine 117, arginine 158, tyrosine 168, and arginine 206 contribute to the ATP site. Residue threonine 53 participates in Mg(2+) binding. The segment at glutamate 169 to glutamine 234 is small ATPAse domain (RuvB-S). Positions aspartate 237–lysine 312 are head domain (RuvB-H). DNA is bound by residues lysine 290 and arginine 295.

It belongs to the RuvB family. Homohexamer. Forms an RuvA(8)-RuvB(12)-Holliday junction (HJ) complex. HJ DNA is sandwiched between 2 RuvA tetramers; dsDNA enters through RuvA and exits via RuvB. An RuvB hexamer assembles on each DNA strand where it exits the tetramer. Each RuvB hexamer is contacted by two RuvA subunits (via domain III) on 2 adjacent RuvB subunits; this complex drives branch migration. In the full resolvosome a probable DNA-RuvA(4)-RuvB(12)-RuvC(2) complex forms which resolves the HJ.

It is found in the cytoplasm. The enzyme catalyses ATP + H2O = ADP + phosphate + H(+). Functionally, the RuvA-RuvB-RuvC complex processes Holliday junction (HJ) DNA during genetic recombination and DNA repair, while the RuvA-RuvB complex plays an important role in the rescue of blocked DNA replication forks via replication fork reversal (RFR). RuvA specifically binds to HJ cruciform DNA, conferring on it an open structure. The RuvB hexamer acts as an ATP-dependent pump, pulling dsDNA into and through the RuvAB complex. RuvB forms 2 homohexamers on either side of HJ DNA bound by 1 or 2 RuvA tetramers; 4 subunits per hexamer contact DNA at a time. Coordinated motions by a converter formed by DNA-disengaged RuvB subunits stimulates ATP hydrolysis and nucleotide exchange. Immobilization of the converter enables RuvB to convert the ATP-contained energy into a lever motion, pulling 2 nucleotides of DNA out of the RuvA tetramer per ATP hydrolyzed, thus driving DNA branch migration. The RuvB motors rotate together with the DNA substrate, which together with the progressing nucleotide cycle form the mechanistic basis for DNA recombination by continuous HJ branch migration. Branch migration allows RuvC to scan DNA until it finds its consensus sequence, where it cleaves and resolves cruciform DNA. The polypeptide is Holliday junction branch migration complex subunit RuvB (Ureaplasma urealyticum serovar 10 (strain ATCC 33699 / Western)).